Reading from the N-terminus, the 843-residue chain is Transmembrane protease serine 7 (843 aa).

At 1–76 the chain is on the cytoplasmic side; it reads MDKENSDVSA…KVPFWNVQNK (76 aa). The disordered stretch occupies residues 27–67; sequence AQKKLPVRRPPLPGRRLPLPGRRPPQRPIGKAKPKKQSKKK. Basic residues predominate over residues 56–67; sequence GKAKPKKQSKKK. Residues 77–97 traverse the membrane as a helical; Signal-anchor for type II membrane protein segment; sequence IILFTVFLFILAVIAWTLLWL. Topologically, residues 98–843 are extracellular; that stretch reads YISKTESKDA…WIHKYVPSLL (746 aa). The SEA domain occupies 106 to 234; sequence DAFYFAGMFR…DSVVLNAGLR (129 aa). 12 disulfide bridges follow: Cys247-Cys273, Cys299-Cys322, Cys365-Cys396, Cys484-Cys496, Cys491-Cys509, Cys503-Cys518, Cys525-Cys544, Cys538-Cys553, Cys559-Cys571, Cys566-Cys585, Cys579-Cys594, and Cys631-Cys647. CUB domains are found at residues 247 to 360 and 365 to 481; these read CSQY…FEVI and CENT…YNIS. 3 LDL-receptor class A domains span residues 483 to 519, 517 to 554, and 558 to 595; these read PCPV…LFCV, FCVS…QNCT, and PCNN…EGCT. The region spanning 606–840 is the Peptidase S1 domain; it reads IIGGTDTLEG…FVPWIHKYVP (235 aa). Residues His646 and Asp694 each act as charge relay system in the active site. 2 cysteine pairs are disulfide-bonded: Cys730/Cys796 and Cys762/Cys775. The active-site Charge relay system is the Ser790.

The protein belongs to the peptidase S1 family. As to quaternary structure, forms a heterodimer with SERPINA5. Post-translationally, N-glycosylated. As to expression, expressed in brain, ovary, testis, salivary gland, trachea and lung.

It localises to the cell membrane. Its function is as follows. Serine protease which preferentially hydrolyzes peptides with Arg at the P1 position. The protein is Transmembrane protease serine 7 (TMPRSS7) of Homo sapiens (Human).